We begin with the raw amino-acid sequence, 224 residues long: Paired immunoglobulin-like type 2 receptor beta (224 aa).

The signal sequence occupies residues 1-28; that stretch reads MALLISLPGGTPAMAQVLLLLSSGCLHA. The Extracellular segment spans residues 29 to 195; that stretch reads GNSERYNRKN…NPSLMNLGAM (167 aa). 3 N-linked (GlcNAc...) asparagine glycosylation sites follow: Asn90, Asn107, and Asn154. A helical transmembrane segment spans residues 196–216; the sequence is VTMLLAKVLVIVLVYGWMIFL. Topologically, residues 217–224 are cytoplasmic; sequence RWKQRPAH.

In terms of assembly, interacts with CD99. Probably associates with DAP12. In terms of tissue distribution, widely expressed with highest levels in spleen, liver and lung. Predominantly expressed by natural killer cells, macrophages, and granulocytes and dendritic cells (BM-DC).

It is found in the membrane. In terms of biological role, paired receptors consist of highly related activating and inhibitory receptors and are widely involved in the regulation of the immune system. PILRB is thought to act as a cellular signaling activating receptor that associates with ITAM-bearing adapter molecules on the cell surface. Seems to associate with DAP12 and is a receptor for CD99. May be involved in target cell recognition by natural killer cells and in activation of dendritic cells. This Mus musculus (Mouse) protein is Paired immunoglobulin-like type 2 receptor beta (Pilrb).